Consider the following 230-residue polypeptide: NEDD8-conjugating enzyme Ubc12 (230 aa).

A disordered region spans residues 1–87; sequence MFRLKELQKK…AELRAQKDID (87 aa). The span at 10 to 20 shows a compositional bias: low complexity; that stretch reads KQQQQQQQQQQ. The segment covering 26 to 36 has biased composition (polar residues); that stretch reads TNGTDAVTTEP. Positions 37 to 57 are enriched in basic and acidic residues; the sequence is TDVKRQNSNDLKEIRKQKSKD. The span at 61-70 shows a compositional bias: polar residues; that stretch reads SLKTKQSSES. The UBC core domain occupies 77-221; that stretch reads PAELRAQKDI…VRQSLRGGYI (145 aa). Cys159 functions as the Glycyl thioester intermediate in the catalytic mechanism.

Belongs to the ubiquitin-conjugating enzyme family. UBC12 subfamily.

It catalyses the reaction [E1 NEDD8-activating enzyme]-S-[NEDD8 protein]-yl-L-cysteine + [E2 NEDD8-conjugating enzyme]-L-cysteine = [E1 NEDD8-activating enzyme]-L-cysteine + [E2 NEDD8-conjugating enzyme]-S-[NEDD8-protein]-yl-L-cysteine.. Its pathway is protein modification; protein neddylation. Accepts the ubiquitin-like protein nedd8 from the uba3-nae1 E1 complex and catalyzes its covalent attachment to other proteins. The polypeptide is NEDD8-conjugating enzyme Ubc12 (ube2m) (Dictyostelium discoideum (Social amoeba)).